The sequence spans 581 residues: Guanine nucleotide-binding protein-like 3 homolog (581 aa).

Residues 1 to 49 (MALKRLKTKKSKRLTGRLKHKIEKKVRDHNKKERRAAKKNPKKGSKKQK) show a composition bias toward basic residues. The segment at 1–50 (MALKRLKTKKSKRLTGRLKHKIEKKVRDHNKKERRAAKKNPKKGSKKQKL) is disordered. Residues 64-108 (LKEVEEAKQRQEAERLARREAFKAEREQNKFKTLESMVEDADMRS) are a coiled coil. Serine 99 is modified (phosphoserine). The CP-type G domain maps to 141-325 (FKEFRKVIEN…LIDCPGIVFT (185 aa)). GTP contacts are provided by residues 189–192 (NKAD), 274–281 (GIPNVGKS), and 318–321 (DCPG). Positions 500–517 (KPAKGRKRKLDEEKEKVD) are enriched in basic and acidic residues. The disordered stretch occupies residues 500 to 519 (KPAKGRKRKLDEEKEKVDPS).

It belongs to the TRAFAC class YlqF/YawG GTPase family.

The protein localises to the nucleus. It is found in the nucleolus. May play a role in regulating cellular proliferation. The chain is Guanine nucleotide-binding protein-like 3 homolog (Ns1) from Drosophila melanogaster (Fruit fly).